A 360-amino-acid chain; its full sequence is S-adenosylmethionine:tRNA ribosyltransferase-isomerase (360 aa).

Belongs to the QueA family. In terms of assembly, monomer.

It localises to the cytoplasm. It catalyses the reaction 7-aminomethyl-7-carbaguanosine(34) in tRNA + S-adenosyl-L-methionine = epoxyqueuosine(34) in tRNA + adenine + L-methionine + 2 H(+). The protein operates within tRNA modification; tRNA-queuosine biosynthesis. Functionally, transfers and isomerizes the ribose moiety from AdoMet to the 7-aminomethyl group of 7-deazaguanine (preQ1-tRNA) to give epoxyqueuosine (oQ-tRNA). The protein is S-adenosylmethionine:tRNA ribosyltransferase-isomerase of Rhodopseudomonas palustris (strain BisB5).